Consider the following 122-residue polypeptide: Large ribosomal subunit protein bL12 (122 aa).

This sequence belongs to the bacterial ribosomal protein bL12 family. In terms of assembly, homodimer. Part of the ribosomal stalk of the 50S ribosomal subunit. Forms a multimeric L10(L12)X complex, where L10 forms an elongated spine to which 2 to 4 L12 dimers bind in a sequential fashion. Binds GTP-bound translation factors.

Forms part of the ribosomal stalk which helps the ribosome interact with GTP-bound translation factors. Is thus essential for accurate translation. This is Large ribosomal subunit protein bL12 from Streptococcus sanguinis (strain SK36).